The chain runs to 437 residues: Phosphoribosylamine--glycine ligase (437 aa).

An ATP-grasp domain is found at 109 to 316 (KDFLARHGIP…LLDLIEAALN (208 aa)). 135 to 196 (VRQQGAPIVI…EEYLDGEEAS (62 aa)) lines the ATP pocket. Positions 286 and 288 each coordinate Mg(2+).

It belongs to the GARS family. Requires Mg(2+) as cofactor. Mn(2+) is required as a cofactor.

The catalysed reaction is 5-phospho-beta-D-ribosylamine + glycine + ATP = N(1)-(5-phospho-beta-D-ribosyl)glycinamide + ADP + phosphate + H(+). It functions in the pathway purine metabolism; IMP biosynthesis via de novo pathway; N(1)-(5-phospho-D-ribosyl)glycinamide from 5-phospho-alpha-D-ribose 1-diphosphate: step 2/2. In Xylella fastidiosa (strain 9a5c), this protein is Phosphoribosylamine--glycine ligase.